A 10287-amino-acid polypeptide reads, in one-letter code: Putative E3 ubiquitin-protein ligase protein PFF1365c (10287 aa).

The TPR 1 repeat unit spans residues 47-82 (TRFFKSISNYGEFLLLQSSSRVISSYEHILRLLHQA). The span at 566–589 (TNKSRDNINQNTNTNNNNNNNNNN) shows a compositional bias: low complexity. The disordered stretch occupies residues 566–592 (TNKSRDNINQNTNTNNNNNNNNNNDGD). The TPR 2 repeat unit spans residues 631-665 (YPMFLKIQNKPQRCLKDISKPCEYYSNTLPIYGSY). Disordered stretches follow at residues 740 to 823 (KSSV…NKKK), 1221 to 1251 (NNSN…SSSS), and 1599 to 1670 (YVDD…DDNN). Composition is skewed to low complexity over residues 767 to 810 (KANN…NNNN), 1221 to 1235 (NNSN…THNS), and 1242 to 1251 (SSSTYSSSSS). Over residues 1601–1635 (DDNEEDEGEEDKSEDYEYCDDEQQNDVYEDTEEES) the composition is skewed to acidic residues. Residues 1641-1653 (RKERRVHQKKKNS) show a composition bias toward basic residues. A compositionally biased stretch (low complexity) spans 1654–1670 (KVSINKKTNNSLSDDNN). 3 helical membrane passes run 1821–1841 (ACTF…TLFV), 1860–1880 (LKMA…GLLT), and 1900–1920 (ECCI…TIMI). Basic residues predominate over residues 2070–2080 (SRRGIPLKKKS). Residues 2070-2112 (SRRGIPLKKKSERNNSKEENVNNMDHNNNNNSNSNNNNFFHRG) form a disordered region. Residues 2090-2107 (VNNMDHNNNNNSNSNNNN) are compositionally biased toward low complexity. An ANK 1 repeat occupies 2116–2145 (TNPRNNNITCDRKNMEFLKKLMKNDHDAVQ). The stretch at 2141-2175 (HDAVQCLGKAYSVFHKNFERAQIAFVAVFLHLTGY) is one TPR 3 repeat. Residues 2854-2865 (NLSSNKRSQKGY) show a composition bias toward polar residues. 9 disordered regions span residues 2854–2945 (NLSS…SKEP), 3087–3113 (KNRN…NNIN), 3303–3344 (NGHT…NDRG), 3561–3599 (FSKG…SSIN), 3942–3998 (TMEN…KDHI), 4076–4157 (LFNS…INYY), 4695–4716 (EKKN…KEEG), 4886–4972 (SPYF…LRNS), and 4984–5051 (YRNK…SNAD). Basic and acidic residues predominate over residues 2886–2929 (SLDKYNDKEKKNDKINNGDTKNSDDGKIDMDDKKYYNDDLKNSD). Positions 3090-3113 (NSNNNNNNNNTNNSNNSNNNNNIN) are enriched in low complexity. Positions 3316-3335 (YDDDNCDNYDNYDNDNENDN) are enriched in acidic residues. Basic and acidic residues-rich tracts occupy residues 3567-3579 (KKEM…EKIK) and 3965-3974 (PSKDKSKHYN). Low complexity predominate over residues 3975–3992 (DNNNNNNDDNNSNNNNDY). Over residues 4079-4094 (SKKDGSSNNDKNDNSN) the composition is skewed to basic and acidic residues. Low complexity-rich tracts occupy residues 4095–4116 (KNRN…NNNN) and 4124–4157 (NINN…INYY). A compositionally biased stretch (polar residues) spans 4906-4917 (YNIQNSDNSNIG). 2 stretches are compositionally biased toward low complexity: residues 4918–4942 (DSEL…DSLN) and 4953–4972 (NSSS…LRNS). Residues 5026–5045 (KIKKNKSYKNKTHKNKKQKN) are compositionally biased toward basic residues. A run of 5 helical transmembrane segments spans residues 5058–5078 (LYGY…CIIL), 5106–5126 (FIKL…KYFA), 5552–5572 (EEIL…YYLG), 5716–5736 (LPIF…VVYI), and 5815–5835 (FLSY…NQII). Residues 5848 to 5917 (VNKNKGNDNV…NNNNVRNSNN (70 aa)) are disordered. One copy of the ANK 2 repeat lies at 6004 to 6032 (GINSLYVNGTNGNLKTDKILLHNFSNFDL). Residues 6051–6084 (LVHYFACAAYYIKRADVYNIMNYYNEHTHANFKQ) form a TPR 4 repeat. Disordered regions lie at residues 6495–6527 (EEEK…HEKK), 7123–7147 (EKKK…DNNR), and 7183–7217 (NKNN…CSNS). The span at 6501 to 6527 (ENEKEVEKDENVHDEKDKVEQIEHEKK) shows a compositional bias: basic and acidic residues. Residues 7129 to 7147 (GSNNIGSNTNIHELSDNNR) are compositionally biased toward polar residues. 2 TPR repeats span residues 7347–7380 (SNDS…KPFI) and 7577–7610 (NNNN…YDDI). The segment covering 7571 to 7583 (DDGNNNNNNNDSM) has biased composition (low complexity). 2 disordered regions span residues 7571–7590 (DDGN…KDDM) and 7653–7712 (SNER…VNNI). A compositionally biased stretch (basic and acidic residues) spans 7696–7706 (DNNKDKDDGNH). ANK repeat units lie at residues 7809–7839 (KYLT…NPNK), 7845–7875 (EKET…QVNK), and 7880–7917 (GNTA…DLTI). Disordered regions lie at residues 8208-8300 (LKDD…SAKN) and 8413-8448 (ALNS…NNYN). Residues 8219 to 8259 (YQKPYDKKVINKNKNDNYDKNDNYDKKDNYDTNDKNDKNNC) are compositionally biased toward basic and acidic residues. The segment covering 8277-8300 (VMNTNSSGRRTISKNSPNLSSAKN) has biased composition (polar residues). Low complexity predominate over residues 8415 to 8448 (NSNMSNNNNNNNNSNNNNNNNSNNNNNNYNNNYN). 2 TPR repeats span residues 8782–8815 (QTCD…SNNI) and 9550–9584 (DLPI…ITSS). 2 disordered regions span residues 9795-9818 (MGSD…HKYD) and 9913-9979 (NVLL…SKNT). 2 stretches are compositionally biased toward basic and acidic residues: residues 9800–9818 (ILKD…HKYD) and 9913–9930 (NVLL…DDIR). Low complexity predominate over residues 9931–9971 (NNMNNNNNNNNNNNNNNNNNNNNNNNNNNNNNNNNNNNNLN). Residues 9938–10273 (NNNNNNNNNN…IKNCTAIDLD (336 aa)) form the HECT domain. The active-site Glycyl thioester intermediate is cysteine 10241.

Its subcellular location is the membrane. The catalysed reaction is S-ubiquitinyl-[E2 ubiquitin-conjugating enzyme]-L-cysteine + [acceptor protein]-L-lysine = [E2 ubiquitin-conjugating enzyme]-L-cysteine + N(6)-ubiquitinyl-[acceptor protein]-L-lysine.. Its pathway is protein modification; protein ubiquitination. In terms of biological role, putative E3 ubiquitin-protein ligase. In Plasmodium falciparum (isolate 3D7), this protein is Putative E3 ubiquitin-protein ligase protein PFF1365c.